Here is a 291-residue protein sequence, read N- to C-terminus: MTDSFPFSVQESVPLSRFSTFRIGGPARYFKELTSVSEALTVFSYLHTHPLPYIIIGKGSNCLFDDQGFDGLVLYNNIQGQEFLSDTQIKVLSGSSFALLGKRLSSQGFSGLEFAVGIPGTVGGAVFMNAGTTLANTASSLINVEIIDHSGILLSIPREKLLFSYRTSPFQKKPAFIASATFQLTKDPQAAKRAKALIEERILKQPYEYPSAGCIFRNPEGLSAGALIDRAGLKGLKIGGGQISEKHGNFIINTGNACTADILELIEIIQKTLKKQGISLHKEVRIIPFRL.

In terms of domain architecture, FAD-binding PCMH-type spans 22–187 (RIGGPARYFK…ASATFQLTKD (166 aa)). Arginine 166 is a catalytic residue. Cysteine 214 serves as the catalytic Proton donor. Glutamate 283 is a catalytic residue.

This sequence belongs to the MurB family. FAD is required as a cofactor.

It localises to the cytoplasm. It carries out the reaction UDP-N-acetyl-alpha-D-muramate + NADP(+) = UDP-N-acetyl-3-O-(1-carboxyvinyl)-alpha-D-glucosamine + NADPH + H(+). It participates in cell wall biogenesis; peptidoglycan biosynthesis. Its function is as follows. Cell wall formation. In Chlamydia trachomatis serovar A (strain ATCC VR-571B / DSM 19440 / HAR-13), this protein is UDP-N-acetylenolpyruvoylglucosamine reductase.